The chain runs to 1469 residues: ABC transporter G family member 36 (1469 aa).

Residue methionine 1 is modified to N-acetylmethionine. Phosphoserine is present on residues serine 37, serine 38, and serine 40. Position 43 is a phosphothreonine (threonine 43). Serine 45 bears the Phosphoserine mark. The ABC transporter 1 domain maps to 171–444; that stretch reads LGMIGIQFAK…FESFGFKCPE (274 aa). An ATP-binding site is contributed by 204-211; it reads GPPSSGKT. In terms of domain architecture, ABC transmembrane type-2 1 spans 522-735; it reads ELLKSCWDKE…AFNGLVVNEM (214 aa). Transmembrane regions (helical) follow at residues 540 to 560, 575 to 595, 621 to 641, 659 to 679, 685 to 705, 713 to 733, and 772 to 792; these read FFYVFKTVQIVIIAAITSTLF, LYIGALLFGMIINMFNGFAEM, LPTFLLGIPSSILESTAWMVV, FLLVFLIQQMAASLFRLIASV, IANTGGALTLLLVFLLGGFLL, WWGWAYWVSPLTYAFNGLVVN, and ISVGALLCFTALFNILFTLAL. Residues 806–852 are disordered; it reads PEEENEDADQGKDPMRRSLSTADGNRRGEVAMGRMSRDSAAEASGGA. Phosphoserine occurs at positions 825, 841, and 844. Over residues 829-845 the composition is skewed to basic and acidic residues; it reads GNRRGEVAMGRMSRDSA. An ABC transporter 2 domain is found at 867–1119; the sequence is MSFDDVKYFV…KVVEYFESFP (253 aa). 912-919 contacts ATP; sequence GVSGAGKT. Residues 1192–1406 enclose the ABC transmembrane type-2 2 domain; that stretch reads GQFKSCLWKQ…TVYGLIVSQY (215 aa). 7 helical membrane-spanning segments follow: residues 1216–1236, 1239–1259, 1299–1319, 1326–1346, 1356–1376, 1384–1404, and 1441–1461; these read FIFTLATSLLIGTVFWQIGGN, NAGDLTMVIGALYAAIIFVGI, LPYVLIQTVYYSLIVYAMVGF, FFWFVFVSYFSFLYWTYYGMM, VASIFASAFYGIFNLFSGFFI, WWIWYYWICPVAWTVYGLIVS, and PVAAVLIAFTVFFAFIFAFCI.

It belongs to the ABC transporter superfamily. ABCG family. PDR (TC 3.A.1.205) subfamily. In terms of assembly, interacts, in a Ca(2+)-dependent manner, with calmodulins CaM3, CaM7 and several CaM-like proteins (CML8, CML9, CML12/CAL4, CML37 and CML38), as well as with calcium regulated proteins CBL4/SOS3 and KIC. Post-translationally, phosphorylated upon perception of pathogen-associated molecular patterns (PAMPs); phosphorylations at Ser-40 and Ser-45, which likely regulate transport activity, are required for plant defense against pathogens (e.g. Blumeria graminis), but dispensable for recruitment to the host-pathogen interface and penetration sites. Phosphorylation at Ser-841 seems to be required for protein stability. Ubiquitous (at protein level). Higher levels in root hairs, stomata, epidermal cells, and hydathodes. Concentrated at the infection site of infected plants, including papillae and haustoria. Accumulates at the periphery of lateral root cap and root epidermal cells, especially in the outer lateral membrane domain facing the environment.

It is found in the cell membrane. It localises to the golgi apparatus. The protein localises to the trans-Golgi network membrane. Its subcellular location is the endoplasmic reticulum membrane. Its function is as follows. Together with ABCG37, regulates auxin homeostasis and responses by playing a dual role in coumarin (e.g. esculin) and in the auxin precursor indole 3-butyric acid (IBA) efflux transport, thus influencing cotyledons, roots and root hairs development. Mediates the transport (export into the apoplast) of distinct indole-type metabolites in distinct biological processes; a precursor of 4-O-beta-D-glucosyl-indol-3-yl formamide (4OGlcI3F), a pathogen-inducible tryptophan-derived compound (e.g. upon Blumeria graminis conidiospore inoculation), being a probable substrate in extracellular pathogen defense. Involved in the cellular detoxification of xenobiotics by promoting the excretion of some auxinic herbicides including 4-(2,4-dichlorophenoxy)butyric acid (2,4-DB) and other members of the phenoxyalkanoic acid family but not 2,4-dichlorophenoxyacetic acid (2,4-D). Mediates thymidine exudation in the rhizosphere. May be a transporter of lignin precursors during tracheary element differentiation. Key factor that controls the extent of cell death in the defense response. Necessary for both callose deposition and glucosinolate activation in response to pathogens. As a central component of nonhost resistance (NHR), required for limiting invasion by nonadapted pathogens including powdery mildews (e.g. Blumeria graminis and Erysiphe pisi), root-penetrating pathogenic fungi (e.g. Fusarium oxysporum), Phakopsora pachyrhizi and Colletotrichum gloeosporioides (anthracnose fungi), probably by sensing Ca(2+) via interactions with calmodulins (e.g. CaM7). Confers resistance to cadmium (Cd) and lead (Pb), probably as an efflux pump of Cd2+ or Cd conjugates, and possibly, of chemicals that mediate pathogen resistance. Promotes resistance to abiotic stresses (e.g. drought and salt stress) and favors general growth by preventing sodium accumulation in plants. Required for microbe-associated molecular patterns (MAMPs)- and salicylic acid (SA)-dependent hypersensitive cell death (HR), involving indole glucosinolate breakdown products (e.g. indole-3-acetonitrile), probably in a PEN2 myrosinase-dependent metabolic pathway, triggered by the recognition of effectors from incompatible pathogens including oomycetes and bacteria (e.g. AvrRpm1 and AvrRps4) and benzothiadiazole- (BTH), and leading to an induced protection against pathogens (e.g. Pseudomonas syringae pv. tomato DC3000, Golovinomyces orontii and Hyaloperonospora arabidopsidis). The sequence is that of ABC transporter G family member 36 from Arabidopsis thaliana (Mouse-ear cress).